The sequence spans 357 residues: MDNSFNDSRRVENCESRQYLLSDESPAISSVMFTAGVLGNLIALALLARRWRGDTGCSAGSRTSISLFHVLVTELVLTDLLGTCLISPVVLASYSRNQTLVALAPESRACTYFAFTMTFFSLATMLMLFAMALERYLAIGHPYFYRRRVSRRGGLAVLPAIYGVSLLFCSLPLLNYGEYVQYCPGTWCFIQHGRTAYLQLYATVLLLLIVAVLGCNISVILNLIRMQLRSKRSRCGLSGSSLRGPGSRRRGERTSMAEETDHLILLAIMTITFAVCSLPFTIFAYMDETSSRKEKWDLRALRFLSVNSIIDPWVFVILRPPVLRLMRSVLCCRTSLRAPEAPGASCSTQQTDLCGQL.

Topologically, residues 1-24 (MDNSFNDSRRVENCESRQYLLSDE) are extracellular. An N-linked (GlcNAc...) asparagine glycan is attached at asparagine 6. A helical transmembrane segment spans residues 25-48 (SPAISSVMFTAGVLGNLIALALLA). Over 49–66 (RRWRGDTGCSAGSRTSIS) the chain is Cytoplasmic. Residues 67-92 (LFHVLVTELVLTDLLGTCLISPVVLA) traverse the membrane as a helical segment. The Extracellular portion of the chain corresponds to 93 to 112 (SYSRNQTLVALAPESRACTY). Cysteines 110 and 188 form a disulfide. A helical membrane pass occupies residues 113–133 (FAFTMTFFSLATMLMLFAMAL). The Cytoplasmic segment spans residues 134-152 (ERYLAIGHPYFYRRRVSRR). Residues 153–177 (GGLAVLPAIYGVSLLFCSLPLLNYG) traverse the membrane as a helical segment. At 178–199 (EYVQYCPGTWCFIQHGRTAYLQ) the chain is on the extracellular side. The chain crosses the membrane as a helical span at residues 200–224 (LYATVLLLLIVAVLGCNISVILNLI). At 225-262 (RMQLRSKRSRCGLSGSSLRGPGSRRRGERTSMAEETDH) the chain is on the cytoplasmic side. Low complexity predominate over residues 235–245 (CGLSGSSLRGP). The tract at residues 235-255 (CGLSGSSLRGPGSRRRGERTS) is disordered. Residues 263-286 (LILLAIMTITFAVCSLPFTIFAYM) form a helical membrane-spanning segment. Over 287–299 (DETSSRKEKWDLR) the chain is Extracellular. The chain crosses the membrane as a helical span at residues 300–323 (ALRFLSVNSIIDPWVFVILRPPVL). Topologically, residues 324-357 (RLMRSVLCCRTSLRAPEAPGASCSTQQTDLCGQL) are cytoplasmic.

Belongs to the G-protein coupled receptor 1 family.

It localises to the cell membrane. Its function is as follows. Receptor for prostaglandin E2 (PGE2). The activity of this receptor is mediated by G(s) proteins that stimulate adenylate cyclase. The subsequent raise in intracellular cAMP is responsible for the relaxing effect of this receptor on smooth muscle. The polypeptide is Prostaglandin E2 receptor EP2 subtype (Ptger2) (Rattus norvegicus (Rat)).